Here is a 156-residue protein sequence, read N- to C-terminus: Nuclear cap-binding protein subunit 2 (156 aa).

The residue at position 2 (Ser-2) is an N-acetylserine. Phosphoserine occurs at positions 13 and 18. Residues Tyr-20, Tyr-43, 112 to 116 (RTDWD), 123 to 127 (RQYGR), and 133 to 134 (QV) contribute to the mRNA site. The 79-residue stretch at 40–118 (CTLYVGNLSF…RIIRTDWDAG (79 aa)) folds into the RRM domain. The segment at 124–156 (QYGRGRSGGQVRDEYRQDYDAGRGGYGKLAQNQ) is disordered. A compositionally biased stretch (basic and acidic residues) spans 134–144 (VRDEYRQDYDA). At Arg-146 the chain carries Omega-N-methylarginine.

This sequence belongs to the RRM NCBP2 family. In terms of assembly, component of the nuclear cap-binding complex (CBC), a heterodimer composed of NCBP1/CBP80 and NCBP2/CBP20 that interacts with m7GpppG-capped RNA. Found in a U snRNA export complex with PHAX/RNUXA, NCBP1/CBP80, NCBP2/CBP20, RAN, XPO1 and m7G-capped RNA. Interacts with PHAX/RNUXA, EIF4G1, HNRNPF, HNRNPH1 and ALYREF/THOC4/ALY. Interacts with SRRT/ARS2 and KPNA3.

It is found in the nucleus. The protein localises to the cytoplasm. In terms of biological role, component of the cap-binding complex (CBC), which binds co-transcriptionally to the 5' cap of pre-mRNAs and is involved in various processes such as pre-mRNA splicing, translation regulation, nonsense-mediated mRNA decay, RNA-mediated gene silencing (RNAi) by microRNAs (miRNAs) and mRNA export. The CBC complex is involved in mRNA export from the nucleus via its interaction with ALYREF/THOC4/ALY, leading to the recruitment of the mRNA export machinery to the 5' end of mRNA and to mRNA export in a 5' to 3' direction through the nuclear pore. The CBC complex is also involved in mediating U snRNA and intronless mRNAs export from the nucleus. The CBC complex is essential for a pioneer round of mRNA translation, before steady state translation when the CBC complex is replaced by cytoplasmic cap-binding protein eIF4E. The pioneer round of mRNA translation mediated by the CBC complex plays a central role in nonsense-mediated mRNA decay (NMD), NMD only taking place in mRNAs bound to the CBC complex, but not on eIF4E-bound mRNAs. The CBC complex enhances NMD in mRNAs containing at least one exon-junction complex (EJC) via its interaction with UPF1, promoting the interaction between UPF1 and UPF2. The CBC complex is also involved in 'failsafe' NMD, which is independent of the EJC complex, while it does not participate in Staufen-mediated mRNA decay (SMD). During cell proliferation, the CBC complex is also involved in microRNAs (miRNAs) biogenesis via its interaction with SRRT/ARS2, thereby being required for miRNA-mediated RNA interference. The CBC complex also acts as a negative regulator of PARN, thereby acting as an inhibitor of mRNA deadenylation. In the CBC complex, NCBP2/CBP20 recognizes and binds capped RNAs (m7GpppG-capped RNA) but requires NCBP1/CBP80 to stabilize the movement of its N-terminal loop and lock the CBC into a high affinity cap-binding state with the cap structure. The conventional cap-binding complex with NCBP2 binds both small nuclear RNA (snRNA) and messenger (mRNA) and is involved in their export from the nucleus. The chain is Nuclear cap-binding protein subunit 2 (NCBP2) from Bos taurus (Bovine).